The following is a 264-amino-acid chain: Thymidylate synthase (264 aa).

Arginine 21 contributes to the dUMP binding site. A (6R)-5,10-methylene-5,6,7,8-tetrahydrofolate-binding site is contributed by histidine 51. Residue 126-127 (RR) coordinates dUMP. The active-site Nucleophile is the cysteine 146. DUMP contacts are provided by residues 166–169 (RSAD), asparagine 177, and 207–209 (HLY). Aspartate 169 contacts (6R)-5,10-methylene-5,6,7,8-tetrahydrofolate. Alanine 263 is a binding site for (6R)-5,10-methylene-5,6,7,8-tetrahydrofolate.

Belongs to the thymidylate synthase family. Bacterial-type ThyA subfamily. Homodimer.

It localises to the cytoplasm. The catalysed reaction is dUMP + (6R)-5,10-methylene-5,6,7,8-tetrahydrofolate = 7,8-dihydrofolate + dTMP. Its pathway is pyrimidine metabolism; dTTP biosynthesis. In terms of biological role, catalyzes the reductive methylation of 2'-deoxyuridine-5'-monophosphate (dUMP) to 2'-deoxythymidine-5'-monophosphate (dTMP) while utilizing 5,10-methylenetetrahydrofolate (mTHF) as the methyl donor and reductant in the reaction, yielding dihydrofolate (DHF) as a by-product. This enzymatic reaction provides an intracellular de novo source of dTMP, an essential precursor for DNA biosynthesis. The chain is Thymidylate synthase from Bartonella tribocorum (strain CIP 105476 / IBS 506).